A 90-amino-acid chain; its full sequence is Small ribosomal subunit protein bS16 (90 aa).

Belongs to the bacterial ribosomal protein bS16 family.

In Clostridioides difficile (strain 630) (Peptoclostridium difficile), this protein is Small ribosomal subunit protein bS16.